Reading from the N-terminus, the 107-residue chain is UPF0122 protein BLi01817/BL02321 (107 aa).

It belongs to the UPF0122 family.

Functionally, might take part in the signal recognition particle (SRP) pathway. This is inferred from the conservation of its genetic proximity to ftsY/ffh. May be a regulatory protein. The sequence is that of UPF0122 protein BLi01817/BL02321 from Bacillus licheniformis (strain ATCC 14580 / DSM 13 / JCM 2505 / CCUG 7422 / NBRC 12200 / NCIMB 9375 / NCTC 10341 / NRRL NRS-1264 / Gibson 46).